Reading from the N-terminus, the 779-residue chain is MASDTPESLMALCTDFCLRNLDGTLGYLLDKETLRLHPDIFLPSEICDQLVNEYVELVSAACTFEPHETFFSLFSDPRSTRLTRIHLREDLVQDQDLEAIRKQDLVELYLTNCEKLSAKSLQTLRSFRHSLVSLSLSGCANIFYEEDNPGGCEDECLVNPTCQVLVKDFTFEGFSRLRFLNLGRMIDGIPVESLLRPLNSLAALDLSGIQTSDATFLTQWKDSLMSLVLYNMDLSDDHIRVIVQLHKLRSKILTCGPHLISSHLDISRDRLSSYYKFKLTRKVLSLLVQKLGNLMSLDISGHMILENCSISKTDEEAGQTSTEPSKSSIMPFRALKRPLQFLGLFETSLCRLTHIPAYKVSGDKNEEQVLNAIEAYTEHRPEITSRAINLLFDIARIERCNQLLRALKLVITALKCHKYDKNIQVTGSAALFYLTNSEYRSEQSVKLRRQVIQVVLNGMESYQEVTVQRNCCLTLCNFSIPEELEFQYRRVNELLLGILSPTRQDESIQRIAVHLCNALVCQVDNDHKEAVGKMGFVVTMLKLIQKKLLDKTCDQVMEFSWSALWNITDETPDNCEMFLNFNGMKLFLDCLKEFPEKQELHRNMLGLLGNVAEVKELRPQLMTSQFISVFSNLLESKADGIEVSYNACGVLSHIMFDGPEAWGVCEPQRAEVEDRMWAAIQSWDINSRRNINYRSFEPILRLLPQGISPVSQHWATWALYNLVSVYPDKYCPLLIKEGGMPLLRDLIKMATARQETKEMARKVIEHCSNFREENMDTSR.

Position 2 is an N-acetylalanine (Ala-2). LRR repeat units follow at residues 226 to 245 (SLVL…IVQL), 246 to 281 (HKLR…KLTR), and 291 to 315 (LGNL…KTDE). 5 ARM repeats span residues 440–480 (RSEQ…NFSI), 524–569 (DNDH…NITD), 571–613 (TPDN…NVAE), 615–656 (KELR…HIMF), and 727–769 (PDKY…HCSN).

The protein belongs to the zyg-11 family. As to quaternary structure, interacts with the ELOC-ELOB/Elongin BC complex. Part of an E3 ubiquitin ligase complex including ZER1, CUL2 and Elongin BC.

Its function is as follows. Serves as substrate adapter subunit in the E3 ubiquitin ligase complex ZYG11B-CUL2-Elongin BC. Acts redudantly with ZYG11B to target substrates bearing N-terminal glycine degrons for proteasomal degradation. Involved in the clearance of proteolytic fragments generated by caspase cleavage during apoptosis since N-terminal glycine degrons are strongly enriched at caspase cleavage sites. Also important in the quality control of protein N-myristoylation in which N-terminal glycine degrons are conditionally exposed after a failure of N-myristoylation. This chain is Protein zer-1 homolog, found in Mus musculus (Mouse).